Here is a 549-residue protein sequence, read N- to C-terminus: Chaperonin GroEL (549 aa).

ATP-binding positions include 30–33 (TLGP), Lys-51, 87–91 (DGTTT), Gly-415, 479–481 (NAA), and Asp-495.

This sequence belongs to the chaperonin (HSP60) family. As to quaternary structure, forms a cylinder of 14 subunits composed of two heptameric rings stacked back-to-back. Interacts with the co-chaperonin GroES.

The protein resides in the cytoplasm. The enzyme catalyses ATP + H2O + a folded polypeptide = ADP + phosphate + an unfolded polypeptide.. Its function is as follows. Together with its co-chaperonin GroES, plays an essential role in assisting protein folding. The GroEL-GroES system forms a nano-cage that allows encapsulation of the non-native substrate proteins and provides a physical environment optimized to promote and accelerate protein folding. The sequence is that of Chaperonin GroEL from Stenotrophomonas maltophilia (strain K279a).